We begin with the raw amino-acid sequence, 497 residues long: Probable cytosol aminopeptidase (497 aa).

Positions 264 and 269 each coordinate Mn(2+). Residue Lys-276 is part of the active site. Mn(2+)-binding residues include Asp-287, Asp-346, and Glu-348. Arg-350 is an active-site residue.

This sequence belongs to the peptidase M17 family. Mn(2+) serves as cofactor.

The protein resides in the cytoplasm. The catalysed reaction is Release of an N-terminal amino acid, Xaa-|-Yaa-, in which Xaa is preferably Leu, but may be other amino acids including Pro although not Arg or Lys, and Yaa may be Pro. Amino acid amides and methyl esters are also readily hydrolyzed, but rates on arylamides are exceedingly low.. It catalyses the reaction Release of an N-terminal amino acid, preferentially leucine, but not glutamic or aspartic acids.. Its function is as follows. Presumably involved in the processing and regular turnover of intracellular proteins. Catalyzes the removal of unsubstituted N-terminal amino acids from various peptides. The chain is Probable cytosol aminopeptidase from Persephonella marina (strain DSM 14350 / EX-H1).